The sequence spans 295 residues: Acetylglutamate kinase (295 aa).

Substrate is bound by residues 66–67, Arg88, and Asn193; that span reads GG.

It belongs to the acetylglutamate kinase family. ArgB subfamily.

It is found in the cytoplasm. It catalyses the reaction N-acetyl-L-glutamate + ATP = N-acetyl-L-glutamyl 5-phosphate + ADP. It functions in the pathway amino-acid biosynthesis; L-arginine biosynthesis; N(2)-acetyl-L-ornithine from L-glutamate: step 2/4. Functionally, catalyzes the ATP-dependent phosphorylation of N-acetyl-L-glutamate. The sequence is that of Acetylglutamate kinase from Rhizobium rhizogenes (strain K84 / ATCC BAA-868) (Agrobacterium radiobacter).